The sequence spans 146 residues: DNA-directed RNA polymerase subunit beta (146 aa).

The protein belongs to the RNA polymerase beta chain family. The RNAP catalytic core consists of 2 alpha, 1 beta, 1 beta' and 1 omega subunit. When a sigma factor is associated with the core the holoenzyme is formed, which can initiate transcription.

The catalysed reaction is RNA(n) + a ribonucleoside 5'-triphosphate = RNA(n+1) + diphosphate. Functionally, DNA-dependent RNA polymerase catalyzes the transcription of DNA into RNA using the four ribonucleoside triphosphates as substrates. This Liberibacter africanus (Citrus greening disease) protein is DNA-directed RNA polymerase subunit beta (rpoB).